Here is a 128-residue protein sequence, read N- to C-terminus: Large ribosomal subunit protein bL12 (128 aa).

The protein belongs to the bacterial ribosomal protein bL12 family. Homodimer. Part of the ribosomal stalk of the 50S ribosomal subunit. Forms a multimeric L10(L12)X complex, where L10 forms an elongated spine to which 2 to 4 L12 dimers bind in a sequential fashion. Binds GTP-bound translation factors.

In terms of biological role, forms part of the ribosomal stalk which helps the ribosome interact with GTP-bound translation factors. Is thus essential for accurate translation. This chain is Large ribosomal subunit protein bL12, found in Halorhodospira halophila (strain DSM 244 / SL1) (Ectothiorhodospira halophila (strain DSM 244 / SL1)).